We begin with the raw amino-acid sequence, 621 residues long: 1-deoxy-D-xylulose-5-phosphate synthase (621 aa).

Residues H80 and 121-123 (GHS) each bind thiamine diphosphate. Residue D152 coordinates Mg(2+). Residues 153 to 154 (GA), N181, Y288, and E370 each bind thiamine diphosphate. Residue N181 coordinates Mg(2+).

Belongs to the transketolase family. DXPS subfamily. In terms of assembly, homodimer. Requires Mg(2+) as cofactor. It depends on thiamine diphosphate as a cofactor.

It catalyses the reaction D-glyceraldehyde 3-phosphate + pyruvate + H(+) = 1-deoxy-D-xylulose 5-phosphate + CO2. The protein operates within metabolic intermediate biosynthesis; 1-deoxy-D-xylulose 5-phosphate biosynthesis; 1-deoxy-D-xylulose 5-phosphate from D-glyceraldehyde 3-phosphate and pyruvate: step 1/1. Its function is as follows. Catalyzes the acyloin condensation reaction between C atoms 2 and 3 of pyruvate and glyceraldehyde 3-phosphate to yield 1-deoxy-D-xylulose-5-phosphate (DXP). In Serratia proteamaculans (strain 568), this protein is 1-deoxy-D-xylulose-5-phosphate synthase.